A 208-amino-acid polypeptide reads, in one-letter code: Small ribosomal subunit protein uS4A (208 aa).

The region spanning 98-161 (LRLDNVVFRM…RKVLRISEAL (64 aa)) is the S4 RNA-binding domain.

The protein belongs to the universal ribosomal protein uS4 family. As to quaternary structure, part of the 30S ribosomal subunit. Contacts protein S5. The interaction surface between S4 and S5 is involved in control of translational fidelity.

In terms of biological role, one of the primary rRNA binding proteins, it binds directly to 16S rRNA where it nucleates assembly of the body of the 30S subunit. Its function is as follows. With S5 and S12 plays an important role in translational accuracy. In Myxococcus xanthus (strain DK1622), this protein is Small ribosomal subunit protein uS4A.